We begin with the raw amino-acid sequence, 233 residues long: Ribonuclease HII (233 aa).

The RNase H type-2 domain occupies lysine 21–leucine 211. Residues aspartate 27, glutamate 28, and aspartate 119 each coordinate a divalent metal cation.

It belongs to the RNase HII family. Mn(2+) serves as cofactor. Requires Mg(2+) as cofactor.

The protein resides in the cytoplasm. It catalyses the reaction Endonucleolytic cleavage to 5'-phosphomonoester.. In terms of biological role, endonuclease that specifically degrades the RNA of RNA-DNA hybrids. The sequence is that of Ribonuclease HII from Streptomyces avermitilis (strain ATCC 31267 / DSM 46492 / JCM 5070 / NBRC 14893 / NCIMB 12804 / NRRL 8165 / MA-4680).